We begin with the raw amino-acid sequence, 434 residues long: Alpha-enolase (434 aa).

A Mg(2+)-binding site is contributed by S40. Substrate-binding residues include H158 and E167. E210 (proton donor) is an active-site residue. Positions 245, 293, and 318 each coordinate Mg(2+). Positions 293 and 318 each coordinate substrate. K343 acts as the Proton acceptor in catalysis. Substrate-binding positions include 370–373 (SHRS) and K394.

It belongs to the enolase family. Homodimer. Mg(2+) is required as a cofactor.

The protein resides in the cytoplasm. The catalysed reaction is (2R)-2-phosphoglycerate = phosphoenolpyruvate + H2O. It functions in the pathway carbohydrate degradation; glycolysis; pyruvate from D-glyceraldehyde 3-phosphate: step 4/5. Functionally, both an enzyme and a lens structural protein. This Anas platyrhynchos (Mallard) protein is Alpha-enolase (ENO1).